The chain runs to 485 residues: Carbohydrate sulfotransferase 7 (485 aa).

The Cytoplasmic segment spans residues 1–12 (MKGRRRRRREYC). A helical; Signal-anchor for type II membrane protein membrane pass occupies residues 13–33 (KFTLLLALYTLLLLLVPSVLD). Over 34 to 485 (SGSEQDKGGR…PLETNANWAT (452 aa)) the chain is Lumenal. The disordered stretch occupies residues 66–88 (EQGAEVRFQAEGNPDRSPRPQGN). N-linked (GlcNAc...) asparagine glycosylation is present at asparagine 88. 109–115 (WRTGSSF) is a binding site for 3'-phosphoadenylyl sulfate. The N-linked (GlcNAc...) asparagine glycan is linked to asparagine 185. A 3'-phosphoadenylyl sulfate-binding site is contributed by 277–285 (RDPRAVHNS). A glycan (N-linked (GlcNAc...) asparagine) is linked at asparagine 406. At serine 461 the chain carries Phosphoserine. Residues 465–475 (RDVKTVRKGET) show a composition bias toward basic and acidic residues. The disordered stretch occupies residues 465-485 (RDVKTVRKGETPLETNANWAT).

It belongs to the sulfotransferase 1 family. Gal/GlcNAc/GalNAc subfamily.

The protein localises to the golgi apparatus membrane. It carries out the reaction chondroitin beta-D-glucuronate + n 3'-phosphoadenylyl sulfate = chondroitin 6'-sulfate + n adenosine 3',5'-bisphosphate + n H(+). Its function is as follows. Sulfotransferase that utilizes 3'-phospho-5'-adenylyl sulfate (PAPS) as sulfonate donor to catalyze the transfer of sulfate to position 6 of non-reducing N-acetylglucosamine (GlcNAc) residues. Preferentially acts on mannose-linked GlcNAc. Also able to catalyze the transfer of sulfate to position 6 of the N-acetylgalactosamine (GalNAc) residue of chondroitin. Also acts on core 2 mucin-type oligosaccharide and N-acetyllactosamine oligomer with a lower efficiency. Has weak or no activity toward keratan sulfate and oligosaccharides containing the Galbeta1-4GlcNAc. Catalyzes 6-O-sulfation of beta-benzyl GlcNAc but not alpha- or beta-benzyl GalNAc. This is Carbohydrate sulfotransferase 7 (Chst7) from Rattus norvegicus (Rat).